The chain runs to 376 residues: UPF0754 membrane protein SERP1382 (376 aa).

The next 2 helical transmembrane spans lie at 4 to 24 (ILLV…TNMI) and 356 to 376 (TLGF…AIFV).

This sequence belongs to the UPF0754 family.

The protein resides in the cell membrane. The polypeptide is UPF0754 membrane protein SERP1382 (Staphylococcus epidermidis (strain ATCC 35984 / DSM 28319 / BCRC 17069 / CCUG 31568 / BM 3577 / RP62A)).